Here is a 123-residue protein sequence, read N- to C-terminus: Nitrogen fixation nifHD1 region GlnB-like protein 2 (123 aa).

Belongs to the P(II) protein family.

Could be involved in the regulation of nitrogen fixation. This Methanosarcina barkeri protein is Nitrogen fixation nifHD1 region GlnB-like protein 2 (glnBB).